A 359-amino-acid chain; its full sequence is MLRDDLDAVPGVPGVLTPEQCRQTAQAIADAQEPSGALPWFEGGHTDPWDHVENAMALTVAGLLEPARAAFDWCRTTQRPDGSWPIQIRNGVVEDANSDSNFCAYVATGVWHHVLITGDRRFAETMWPVVAKAIDFVIDMQLPGGEIAWARSPSGLYEEALLTGCASIYHSIRCALALADYMGEPQPEWEVAVGRLGHAIAEHPEAFVTKDRWSMEWYYPVLGGALRGEAARARINRRWNDFVVPGLGIRCVDDRPWVTGAETCELVLALDAIGDLTRAHEQFAAMHHLREEDGSYWTGLVYDDGKRWPIERTTWTGAAMILAADALSRTTPGNGIFRGVDLPRGLEGEYDCACATSER.

As to quaternary structure, monomer in solution.

It catalyses the reaction Endohydrolysis of 3-O-methyl-alpha-D-mannosyl-(1-&gt;4)-3-O-methyl-D-mannose linkages within (1,4)-3-O-methyl-alpha-D-mannnan substrates.. Functionally, hydrolase involved in the biosynthesis of 3-O-methylmannose polysaccharides (MMP), which are intracellular polymethylated polysaccharides implicated in the modulation of fatty acid metabolism in non-tuberculous mycobacteria. Highly specific hydrolase that catalyzes the internal cleavage of MMP. Is able to hydrolyze purified MMP into distinct lower order oligomannosides but does not cleave acylated or deacylated forms of 6-O-methylglucose lipopolysaccharide (MGLP), beta-mannans, synthetic 4alpha-oligomannosides or its own reaction products. Products were identified as four distinct oligomannosides differing in the number of mannose units (4 to 8) and methylation pattern (free or methylated C1-OH). Might serve as a recycling enzyme that hydrolyzes mature MMP into defined-size smaller oligomannosides that are, in turn, substrates for ManT and MeT1 activities for further processing into new daughter MMP chains. The protein is MMP endo-(1,4)-3-O-methyl-alpha-D-mannosidase of Mycolicibacterium hassiacum (strain DSM 44199 / CIP 105218 / JCM 12690 / 3849) (Mycobacterium hassiacum).